Reading from the N-terminus, the 576-residue chain is Trehalase (576 aa).

An N-terminal signal peptide occupies residues 1 to 20 (MTWELHLLLLLGLGLRSQEA). Asparagine 75 carries an N-linked (GlcNAc...) asparagine glycan. Substrate contacts are provided by residues arginine 165, 172–173 (WD), asparagine 209, and 218–220 (RSQ). Residue asparagine 258 is glycosylated (N-linked (GlcNAc...) asparagine). Substrate-binding positions include 283-285 (RPE) and glycine 316. Aspartate 318 serves as the catalytic Proton donor/acceptor. Residue asparagine 366 is glycosylated (N-linked (GlcNAc...) asparagine). Glutamate 511 acts as the Proton donor/acceptor in catalysis. Residue glutamate 526 coordinates substrate. The GPI-anchor amidated serine moiety is linked to residue serine 553. Residues 554–576 (GTQLASLGPHCLVAALLLSLLLQ) constitute a propeptide, removed in mature form.

It belongs to the glycosyl hydrolase 37 family. As to quaternary structure, homodimer; disulfide-linked.

It localises to the cell membrane. It catalyses the reaction alpha,alpha-trehalose + H2O = alpha-D-glucose + beta-D-glucose. Functionally, intestinal trehalase is probably involved in the hydrolysis of ingested trehalose. The chain is Trehalase from Mus musculus (Mouse).